Here is a 375-residue protein sequence, read N- to C-terminus: Glutamate 5-kinase (375 aa).

Residue Lys3 participates in ATP binding. 3 residues coordinate substrate: Ser44, Asp131, and Asn143. Residues 163-164 and 205-211 each bind ATP; these read SD and TGGMVTK. Positions 269-346 constitute a PUA domain; sequence EGTLWVDDGA…GDIEALLGYR (78 aa).

It belongs to the glutamate 5-kinase family.

The protein localises to the cytoplasm. It carries out the reaction L-glutamate + ATP = L-glutamyl 5-phosphate + ADP. It participates in amino-acid biosynthesis; L-proline biosynthesis; L-glutamate 5-semialdehyde from L-glutamate: step 1/2. In terms of biological role, catalyzes the transfer of a phosphate group to glutamate to form L-glutamate 5-phosphate. The protein is Glutamate 5-kinase of Rhodospirillum rubrum (strain ATCC 11170 / ATH 1.1.1 / DSM 467 / LMG 4362 / NCIMB 8255 / S1).